The following is a 630-amino-acid chain: Plastin-1 (630 aa).

Residue Met1 is modified to N-acetylmethionine. 2 consecutive EF-hand domains span residues 11 to 46 (EELE…ASLP) and 51 to 86 (KVRE…LKSK). Asp24, Asp26, Ser28, Tyr30, Glu35, Asp64, Asn66, Asp68, Lys70, and Glu75 together coordinate Ca(2+). 2 actin-binding regions span residues 108–381 (TSSI…CLHK) and 382–626 (PDNN…GKGL). Calponin-homology (CH) domains lie at 122 to 238 (EEEK…KVGL), 266 to 377 (LSPE…NTYP), 396 to 505 (SKEE…RRYT), and 517 to 626 (KVTD…GKGL).

As to quaternary structure, monomer. Phosphorylated. As to expression, in the inner ear, it is expressed in the organ of Corti. Abundant in the utricle (at protein level).

It is found in the cytoplasm. Its subcellular location is the cell projection. It localises to the stereocilium. Actin-bundling protein. In the inner ear, it is required for stereocilia formation. Mediates liquid packing of actin filaments that is necessary for stereocilia to grow to their proper dimensions. The protein is Plastin-1 (Pls1) of Mus musculus (Mouse).